We begin with the raw amino-acid sequence, 452 residues long: Ketoisovalerate reductase BEA2 (452 aa).

Residue 70 to 75 coordinates NADP(+); that stretch reads GPGNIG. The active-site Proton donor is Lys285. Positions 289, 293, and 393 each coordinate substrate. Residue Glu405 participates in NADP(+) binding.

The protein belongs to the ketopantoate reductase family.

The enzyme catalyses (R)-2-hydroxy-3-methylbutanoate + NADP(+) = 3-methyl-2-oxobutanoate + NADPH + H(+). Its function is as follows. Ketoisovalerate reductase; part of the gene cluster that mediates the biosynthesis of beauvericin (BEA), a non-ribosomal cyclic hexadepsipeptide that shows antibiotic, antifungal, insecticidal, and cancer cell antiproliferative and antihaptotactic activity. Ketoisovalerate reductase BEA2 catalyzes the NADPH-specific reduction of ketoisovaleric acid to hydroxyisovalerate, a precursor for beauvericin biosynthesis. The nonribosomal cyclodepsipeptide synthetase BEA1 then catalyzes the formation of beauvericin via condensation and cyclization of 3 dipeptidol monomers, each composed of one unit of hydroxyisovalerate and one unit of N-methyl-phenylalanine. The sequence is that of Ketoisovalerate reductase BEA2 from Gibberella fujikuroi (strain CBS 195.34 / IMI 58289 / NRRL A-6831) (Bakanae and foot rot disease fungus).